The chain runs to 200 residues: Casparian strip membrane protein 1 (200 aa).

Residues 1 to 38 (MSTTIEIPAESSAVAKGKAPLIGASSSSYEKKGGYKKG) lie on the Cytoplasmic side of the membrane. A helical membrane pass occupies residues 39–59 (IAIFDFILRLGAVISALSAAA). At 60–88 (TMGTSDETLPFFTQFFQFEAGYDDFPTFQ) the chain is on the extracellular side. The helical transmembrane segment at 89–109 (FFVIAMGFVGGYLVLSLPFSV) threads the bilayer. Topologically, residues 110 to 121 (VAIIRPHAVGIR) are cytoplasmic. Residues 122 to 142 (LLLLILDTVALTLNTAAAAAA) form a helical membrane-spanning segment. The Extracellular segment spans residues 143–175 (AAIVYLAHNGNQSANWLAVCQQFGDFCQKVSGG). Residue N153 is glycosylated (N-linked (GlcNAc...) asparagine). A helical transmembrane segment spans residues 176–196 (VVASFVSVLVFLLLVVMSAVA). The Cytoplasmic portion of the chain corresponds to 197-200 (LRKH).

The protein belongs to the Casparian strip membrane proteins (CASP) family. Homodimer and heterodimers.

The protein localises to the cell membrane. Functionally, regulates membrane-cell wall junctions and localized cell wall deposition. Required for establishment of the Casparian strip membrane domain (CSD) and the subsequent formation of Casparian strips, a cell wall modification of the root endodermis that determines an apoplastic barrier between the intraorganismal apoplasm and the extraorganismal apoplasm and prevents lateral diffusion. The chain is Casparian strip membrane protein 1 from Ricinus communis (Castor bean).